Here is a 269-residue protein sequence, read N- to C-terminus: tRNA-cytidine(32) 2-sulfurtransferase (269 aa).

Positions Ser53–Ser58 match the PP-loop motif motif. [4Fe-4S] cluster-binding residues include Cys128, Cys131, and Cys218.

This sequence belongs to the TtcA family. As to quaternary structure, homodimer. It depends on Mg(2+) as a cofactor. The cofactor is [4Fe-4S] cluster.

Its subcellular location is the cytoplasm. The catalysed reaction is cytidine(32) in tRNA + S-sulfanyl-L-cysteinyl-[cysteine desulfurase] + AH2 + ATP = 2-thiocytidine(32) in tRNA + L-cysteinyl-[cysteine desulfurase] + A + AMP + diphosphate + H(+). It functions in the pathway tRNA modification. Functionally, catalyzes the ATP-dependent 2-thiolation of cytidine in position 32 of tRNA, to form 2-thiocytidine (s(2)C32). The sulfur atoms are provided by the cysteine/cysteine desulfurase (IscS) system. This Pelobacter propionicus (strain DSM 2379 / NBRC 103807 / OttBd1) protein is tRNA-cytidine(32) 2-sulfurtransferase.